A 255-amino-acid chain; its full sequence is NADPH-dependent FMN reductase ArsH (255 aa).

43-50 (SLRARSFS) serves as a coordination point for FMN.

This sequence belongs to the ArsH family. Homotetramer. Requires FMN as cofactor.

Its function is as follows. Has NADPH-dependent FMN reductase activity and very low azoreductase activity. No activity with NADH. This is NADPH-dependent FMN reductase ArsH from Shigella flexneri.